A 378-amino-acid chain; its full sequence is MTTQFSVAGVELELLRYPAQQESNLQAWDAADEHLLKSLIESEQAAVPTAIVNDSFGALSCGLSKLHPSWPLFVETDARTSFLGTEQNHGRNQLPMDNLQRFTSRDTLPENLALVLMKLPKNLSYFAHQLTRLSQVLPAGTRVLVAAKAKSINSALLDIFAKHLGPASASLAWKNTRVITCVSDGKPRPLAKEVTWAVPEYQLEISNLSNVFAANKLDIGARIMLENLPKGNFKSIVDLGCGNGVLGLRTAQLSPEADIHFIDDSEMAVASAKANWARNQLPADKGHFYWDDCMTHLPEEVQPDLVLCNPPFHQGEAITDHIAWQMFLDARRRLKEGGILHIVGNRHLAYHVKLQRLFKNCTTVASNGKFVILQAQKK.

The protein belongs to the methyltransferase superfamily. RlmG family.

The protein localises to the cytoplasm. The enzyme catalyses guanosine(1835) in 23S rRNA + S-adenosyl-L-methionine = N(2)-methylguanosine(1835) in 23S rRNA + S-adenosyl-L-homocysteine + H(+). Functionally, specifically methylates the guanine in position 1835 (m2G1835) of 23S rRNA. The chain is Ribosomal RNA large subunit methyltransferase G from Shewanella putrefaciens (strain CN-32 / ATCC BAA-453).